A 258-amino-acid polypeptide reads, in one-letter code: (7aS)-7a-methyl-1,5-dioxo-2,3,5,6,7,7a-hexahydro-1H-indene-carboxyl-CoA hydrolase (258 aa).

It belongs to the enoyl-CoA hydratase/isomerase family.

It carries out the reaction (7aS)-7a-methyl-1,5-dioxo-2,3,5,6,7,7a-hexahydro-1H-indene-carboxyl-CoA + H2O = (3E)-2-(2-carboxylatoethyl)-3-methyl-6-oxocyclohex-1-ene-1-carboxyl-CoA + H(+). The protein operates within steroid metabolism; cholesterol degradation. Its function is as follows. Involved in the final steps of cholesterol and steroid degradation. Catalyzes the hydrolytic ring D opening of (7aS)-7a-methyl-1,5-dioxo-2,3,5,6,7,7a-hexahydro-1H-indene-carboxyl-CoA (HIEC-CoA) to (3E)-2-(2-carboxylatoethyl)-3-methyl-6-oxocyclohex-1-ene-1-carboxyl-CoA (COCHEA-CoA). The sequence is that of (7aS)-7a-methyl-1,5-dioxo-2,3,5,6,7,7a-hexahydro-1H-indene-carboxyl-CoA hydrolase from Rhodococcus jostii (strain RHA1).